Reading from the N-terminus, the 151-residue chain is Cytochrome c oxidase subunit 5B, mitochondrial (151 aa).

A mitochondrion-targeting transit peptide spans 1 to 17 (MLRTSLTKGARLTGTRF). Over 18 to 85 (VQTKALSKAT…EWGPRRPVHG (68 aa)) the chain is Mitochondrial matrix. Residues 86–108 (KGDVAFITKGVFLGLGISFGLFG) traverse the membrane as a helical segment. Residues 109-151 (LVRLLANPETPKTMNREWQLKSDEYLKSKNANPWGGYSQVQSK) are Mitochondrial intermembrane-facing.

The protein belongs to the cytochrome c oxidase IV family. Component of the cytochrome c oxidase (complex IV, CIV), a multisubunit enzyme composed of 12 subunits. The complex is composed of a catalytic core of 3 subunits COX1, COX2 and COX3, encoded in the mitochondrial DNA, and 9 supernumerary subunits COX4, COX5A (or COX5B), COX6, COX7, COX8, COX9, COX12, COX13 and COX26, which are encoded in the nuclear genome. COX5A is the predominant subunit V during aerobic/normoxic growth, it gets replaced by COX5B under anaerobic/hypoxic conditions. The complex exists as a monomer or a dimer and forms supercomplexes (SCs) in the inner mitochondrial membrane with a dimer of ubiquinol-cytochrome c oxidoreductase (cytochrome b-c1 complex, complex III, CIII), resulting in 2 different assemblies (supercomplexes III(2)IV and III(2)IV(2)).

It localises to the mitochondrion inner membrane. The protein operates within energy metabolism; oxidative phosphorylation. Its function is as follows. Component of the cytochrome c oxidase, the last enzyme in the mitochondrial electron transport chain which drives oxidative phosphorylation. The respiratory chain contains 3 multisubunit complexes succinate dehydrogenase (complex II, CII), ubiquinol-cytochrome c oxidoreductase (cytochrome b-c1 complex, complex III, CIII) and cytochrome c oxidase (complex IV, CIV), that cooperate to transfer electrons derived from NADH and succinate to molecular oxygen, creating an electrochemical gradient over the inner membrane that drives transmembrane transport and the ATP synthase. Cytochrome c oxidase is the component of the respiratory chain that catalyzes the reduction of oxygen to water. Electrons originating from reduced cytochrome c in the intermembrane space (IMS) are transferred via the dinuclear copper A center (CU(A)) of COX2 and heme A of COX1 to the active site in COX1, a binuclear center (BNC) formed by heme A3 and copper B (CU(B)). The BNC reduces molecular oxygen to 2 water molecules using 4 electrons from cytochrome c in the IMS and 4 protons from the mitochondrial matrix. This Saccharomyces cerevisiae (strain ATCC 204508 / S288c) (Baker's yeast) protein is Cytochrome c oxidase subunit 5B, mitochondrial (COX5B).